We begin with the raw amino-acid sequence, 218 residues long: 3-phospho-D-glycerate guanylyltransferase (218 aa).

The protein belongs to the CofC family.

The enzyme catalyses (2R)-3-phosphoglycerate + GTP + H(+) = 3-[(R)-glyceryl]-diphospho-5'-guanosine + diphosphate. The protein operates within cofactor biosynthesis; coenzyme F420 biosynthesis. Guanylyltransferase that catalyzes the activation of (2R)-3-phosphoglycerate (3PG) as 3-[(R)-glyceryl]-diphospho-5'-guanosine, via the condensation of 3PG with GTP. It is involved in the biosynthesis of a derivative of the hydride carrier cofactor coenzyme F420, 3PG-F420. This chain is 3-phospho-D-glycerate guanylyltransferase, found in Phenylobacterium zucineum (strain HLK1).